Reading from the N-terminus, the 152-residue chain is SsrA-binding protein (152 aa).

It belongs to the SmpB family.

The protein localises to the cytoplasm. Its function is as follows. Required for rescue of stalled ribosomes mediated by trans-translation. Binds to transfer-messenger RNA (tmRNA), required for stable association of tmRNA with ribosomes. tmRNA and SmpB together mimic tRNA shape, replacing the anticodon stem-loop with SmpB. tmRNA is encoded by the ssrA gene; the 2 termini fold to resemble tRNA(Ala) and it encodes a 'tag peptide', a short internal open reading frame. During trans-translation Ala-aminoacylated tmRNA acts like a tRNA, entering the A-site of stalled ribosomes, displacing the stalled mRNA. The ribosome then switches to translate the ORF on the tmRNA; the nascent peptide is terminated with the 'tag peptide' encoded by the tmRNA and targeted for degradation. The ribosome is freed to recommence translation, which seems to be the essential function of trans-translation. The protein is SsrA-binding protein of Rickettsia africae (strain ESF-5).